We begin with the raw amino-acid sequence, 202 residues long: Imidazole glycerol phosphate synthase subunit HisH (202 aa).

The Glutamine amidotransferase type-1 domain maps to 3–202; that stretch reads RIVIIDYGLG…KILKNFVEMC (200 aa). Residue C79 is the Nucleophile of the active site. Active-site residues include H183 and E185.

Heterodimer of HisH and HisF.

Its subcellular location is the cytoplasm. It catalyses the reaction 5-[(5-phospho-1-deoxy-D-ribulos-1-ylimino)methylamino]-1-(5-phospho-beta-D-ribosyl)imidazole-4-carboxamide + L-glutamine = D-erythro-1-(imidazol-4-yl)glycerol 3-phosphate + 5-amino-1-(5-phospho-beta-D-ribosyl)imidazole-4-carboxamide + L-glutamate + H(+). It carries out the reaction L-glutamine + H2O = L-glutamate + NH4(+). The protein operates within amino-acid biosynthesis; L-histidine biosynthesis; L-histidine from 5-phospho-alpha-D-ribose 1-diphosphate: step 5/9. Functionally, IGPS catalyzes the conversion of PRFAR and glutamine to IGP, AICAR and glutamate. The HisH subunit catalyzes the hydrolysis of glutamine to glutamate and ammonia as part of the synthesis of IGP and AICAR. The resulting ammonia molecule is channeled to the active site of HisF. The protein is Imidazole glycerol phosphate synthase subunit HisH of Methanosarcina acetivorans (strain ATCC 35395 / DSM 2834 / JCM 12185 / C2A).